Here is a 350-residue protein sequence, read N- to C-terminus: Putative isomerase YbhH (350 aa).

Belongs to the PrpF family.

This is Putative isomerase YbhH (ybhH) from Escherichia coli O6:H1 (strain CFT073 / ATCC 700928 / UPEC).